The sequence spans 89 residues: MAEDDVVFVGNKPVMNYVLAVVTQFNSGAKEVRIMARGRAISRAVDVAEVSRSRFLGDVVVKDIKISTETLNTDRGETNVSAIEIVLGK.

This sequence belongs to the histone-like Alba family.

It is found in the cytoplasm. Its subcellular location is the chromosome. In terms of biological role, binds double-stranded DNA tightly but without sequence specificity. Involved in DNA compaction. This Methanothrix thermoacetophila (strain DSM 6194 / JCM 14653 / NBRC 101360 / PT) (Methanosaeta thermophila) protein is DNA/RNA-binding protein Alba.